Consider the following 90-residue polypeptide: Small ribosomal subunit protein uS15c (90 aa).

The protein belongs to the universal ribosomal protein uS15 family. In terms of assembly, part of the 30S ribosomal subunit.

Its subcellular location is the plastid. It localises to the chloroplast. The polypeptide is Small ribosomal subunit protein uS15c (rps15) (Nandina domestica (Heavenly bamboo)).